The chain runs to 271 residues: Ferric vulnibactin reductase VuuB (271 aa).

One can recognise an FAD-binding FR-type domain in the interval 8-131; it reads VYPMLLDFVR…IGPAGPDPLI (124 aa).

This sequence belongs to the SIP oxidoreductase family. In terms of assembly, monomer. It depends on FAD as a cofactor.

It localises to the cytoplasm. It carries out the reaction 2 a Fe(II)-siderophore + NAD(+) + H(+) = 2 a Fe(III)-siderophore + NADH. In terms of biological role, ferric-siderophore reductase involved in iron removal from the siderophores after their transport into the cell. Acts as a major ferric-vulnibactin reductase catalyzing the reduction of Fe(3+)-vulnibactin, a catecholate siderophore synthesized by V.vulnificus. Catalyzes reduction of Fe(3+)-aerobactin, a citrate-hydroxamate siderophore produced by other bacteria, in the absence of IutB. Catalyzes reduction of Fe(3+)-vibriobactin in vitro. No activity with ferrioxamine B or Fe(3+)-enterobactin. Catalyzes reduction of ferric chelating compounds Fe(3+)-nitrilotriacetic acid (NTA), Fe(3+)-citrate and Fe(3+)-EDTA as well as non-complexed FeCl3 in the presence of NADH as its electron donor and FAD as its cofactor in vitro. Highest activity with Fe(3+)-NTA as electron acceptor. The protein is Ferric vulnibactin reductase VuuB of Vibrio vulnificus.